The following is a 558-amino-acid chain: Dihydroxy-acid dehydratase (558 aa).

A Mg(2+)-binding site is contributed by D78. Residue C119 participates in [2Fe-2S] cluster binding. Residues D120 and K121 each contribute to the Mg(2+) site. Position 121 is an N6-carboxylysine (K121). C192 is a [2Fe-2S] cluster binding site. Residue E446 coordinates Mg(2+). The active-site Proton acceptor is S472.

Belongs to the IlvD/Edd family. In terms of assembly, homodimer. [2Fe-2S] cluster is required as a cofactor. Mg(2+) serves as cofactor.

The catalysed reaction is (2R)-2,3-dihydroxy-3-methylbutanoate = 3-methyl-2-oxobutanoate + H2O. It catalyses the reaction (2R,3R)-2,3-dihydroxy-3-methylpentanoate = (S)-3-methyl-2-oxopentanoate + H2O. It participates in amino-acid biosynthesis; L-isoleucine biosynthesis; L-isoleucine from 2-oxobutanoate: step 3/4. Its pathway is amino-acid biosynthesis; L-valine biosynthesis; L-valine from pyruvate: step 3/4. In terms of biological role, functions in the biosynthesis of branched-chain amino acids. Catalyzes the dehydration of (2R,3R)-2,3-dihydroxy-3-methylpentanoate (2,3-dihydroxy-3-methylvalerate) into 2-oxo-3-methylpentanoate (2-oxo-3-methylvalerate) and of (2R)-2,3-dihydroxy-3-methylbutanoate (2,3-dihydroxyisovalerate) into 2-oxo-3-methylbutanoate (2-oxoisovalerate), the penultimate precursor to L-isoleucine and L-valine, respectively. The protein is Dihydroxy-acid dehydratase of Campylobacter jejuni subsp. jejuni serotype O:2 (strain ATCC 700819 / NCTC 11168).